The primary structure comprises 330 residues: Ferredoxin--NADP reductase (330 aa).

Residues threonine 18, glutamate 37, glutamine 45, tyrosine 50, valine 90, phenylalanine 124, aspartate 286, and threonine 327 each contribute to the FAD site.

Belongs to the ferredoxin--NADP reductase type 2 family. In terms of assembly, homodimer. FAD is required as a cofactor.

The catalysed reaction is 2 reduced [2Fe-2S]-[ferredoxin] + NADP(+) + H(+) = 2 oxidized [2Fe-2S]-[ferredoxin] + NADPH. This chain is Ferredoxin--NADP reductase, found in Halalkalibacterium halodurans (strain ATCC BAA-125 / DSM 18197 / FERM 7344 / JCM 9153 / C-125) (Bacillus halodurans).